Consider the following 369-residue polypeptide: Nuclear hormone receptor family member nhr-64 (369 aa).

A DNA-binding region (nuclear receptor) is located at residues 67-142; that stretch reads EKCQVDKAKR…ASTRGLRTTV (76 aa). NR C4-type zinc fingers lie at residues 70-90 and 106-130; these read QVDK…CLRK and PANP…TLIR. An NR LBD domain is found at 120 to 352; the sequence is PDDPLLDTLI…NLMLELMLPN (233 aa).

The protein belongs to the nuclear hormone receptor family.

The protein localises to the nucleus. Functionally, orphan nuclear receptor. The protein is Nuclear hormone receptor family member nhr-64 (nhr-64) of Caenorhabditis elegans.